Here is a 202-residue protein sequence, read N- to C-terminus: Small ribosomal subunit protein uS4 (202 aa).

Basic residues predominate over residues M1–R13. Positions M1 to R42 are disordered. Residues N90–N152 form the S4 RNA-binding domain.

Belongs to the universal ribosomal protein uS4 family. As to quaternary structure, part of the 30S ribosomal subunit. Contacts protein S5. The interaction surface between S4 and S5 is involved in control of translational fidelity.

Its function is as follows. One of the primary rRNA binding proteins, it binds directly to 16S rRNA where it nucleates assembly of the body of the 30S subunit. In terms of biological role, with S5 and S12 plays an important role in translational accuracy. The protein is Small ribosomal subunit protein uS4 of Prochlorococcus marinus (strain AS9601).